A 106-amino-acid chain; its full sequence is ATP-dependent Clp protease adapter protein ClpS (106 aa).

This sequence belongs to the ClpS family. In terms of assembly, binds to the N-terminal domain of the chaperone ClpA.

Involved in the modulation of the specificity of the ClpAP-mediated ATP-dependent protein degradation. The polypeptide is ATP-dependent Clp protease adapter protein ClpS (Yersinia enterocolitica serotype O:8 / biotype 1B (strain NCTC 13174 / 8081)).